A 626-amino-acid chain; its full sequence is tRNA uridine 5-carboxymethylaminomethyl modification enzyme MnmG (626 aa).

13-18 lines the FAD pocket; it reads GGGHAG. Residue 273–287 coordinates NAD(+); sequence GPRYCPSIEDKIHRF.

The protein belongs to the MnmG family. Homodimer. Heterotetramer of two MnmE and two MnmG subunits. Requires FAD as cofactor.

Its subcellular location is the cytoplasm. Its function is as follows. NAD-binding protein involved in the addition of a carboxymethylaminomethyl (cmnm) group at the wobble position (U34) of certain tRNAs, forming tRNA-cmnm(5)s(2)U34. This is tRNA uridine 5-carboxymethylaminomethyl modification enzyme MnmG from Acinetobacter baumannii (strain ATCC 17978 / DSM 105126 / CIP 53.77 / LMG 1025 / NCDC KC755 / 5377).